The chain runs to 212 residues: Uracil-DNA glycosylase (212 aa).

Catalysis depends on Asp-59, which acts as the Proton acceptor.

It belongs to the uracil-DNA glycosylase (UDG) superfamily. UNG family.

The protein resides in the cytoplasm. The enzyme catalyses Hydrolyzes single-stranded DNA or mismatched double-stranded DNA and polynucleotides, releasing free uracil.. In terms of biological role, excises uracil residues from the DNA which can arise as a result of misincorporation of dUMP residues by DNA polymerase or due to deamination of cytosine. The protein is Uracil-DNA glycosylase of Ureaplasma urealyticum serovar 10 (strain ATCC 33699 / Western).